The sequence spans 60 residues: Large ribosomal subunit protein uL30 (60 aa).

This sequence belongs to the universal ribosomal protein uL30 family. Part of the 50S ribosomal subunit.

This Streptomyces coelicolor (strain ATCC BAA-471 / A3(2) / M145) protein is Large ribosomal subunit protein uL30.